Reading from the N-terminus, the 876-residue chain is uncharacterized protein (876 aa).

Residues 37-48 (DEDKSNNDDRRS) are compositionally biased toward basic and acidic residues. Disordered regions lie at residues 37-67 (DEDKSNNDDRRSLASILDSSSSVKKKGKGSN), 112-155 (DESG…RNIK), 226-254 (KKKSSEGATPTIKFNPPIEDGFTPLTKSQ), and 330-353 (MMMDDSRSVSSARRSRSRSRSRSI). A phosphoserine mark is found at serine 48 and serine 51. Over residues 49–58 (LASILDSSSS) the composition is skewed to low complexity. Positions 115–131 (GFTSDNNADYFSGNSYS) are enriched in polar residues. Phosphoserine is present on residues serine 360, serine 510, serine 552, and serine 577. The disordered stretch occupies residues 490 to 513 (PEVTKQKNTSGPKPGFSHSKSADA). 2 disordered regions span residues 661–728 (ITGG…RSPQ) and 750–876 (RHSL…FGRL). A compositionally biased stretch (basic residues) spans 689–699 (SKSKSRSSSKS). A compositionally biased stretch (low complexity) spans 717 to 726 (SSASASRSRS). Serine 775 carries the phosphoserine modification. 2 stretches are compositionally biased toward low complexity: residues 794 to 808 (NKDSSLRKVSSSSSL) and 842 to 854 (FSFFKSKSRSPSS).

This is an uncharacterized protein from Saccharomyces cerevisiae (strain ATCC 204508 / S288c) (Baker's yeast).